The chain runs to 471 residues: Eremophilane O-acetyltransferase prx11 (471 aa).

The protein belongs to the fumigaclavine B O-acetyltransferase family. Monomer.

It participates in sesquiterpene biosynthesis. In terms of biological role, O-acetyltransferase; part of the gene cluster that mediates the biosynthesis of PR-toxin, a bicyclic sesquiterpene belonging to the eremophilane class and acting as a mycotoxin. The first step of the pathway is catalyzed by the aristolochene synthase which performs the cyclization of trans,trans-farnesyl diphosphate (FPP) to the bicyclic sesquiterpene aristolochene. Following the formation of aristolochene, the non-oxygenated aristolochene is converted to the trioxygenated intermediate eremofortin B, via 7-epi-neopetasone. This conversion appears to involve three enzymes, a hydroxysterol oxidase-like enzyme, the quinone-oxidase prx3 that forms the quinone-type-structure in the bicyclic nucleus of aristolochene with the C8-oxo group and the C-3 hydroxyl group, and the P450 monooxygenase prx9 that introduces the epoxide at the double bond between carbons 1 and 2. No monoxy or dioxy-intermediates have been reported to be released to the broth, so these three early oxidative reactions may be coupled together. Eremofortin B is further oxidized by another P450 monooxygenase, that introduces a second epoxide between carbons 7 and 11 prior to acetylation to eremofortin A by the acetyltransferase prx11. The second epoxidation may be performed by a second P450 monooxygenase. After the acetylation step, eremofortin A is converted to eremofortin C and then to PR-toxin. First the conversion of eremofortin A to eremofortin C proceeds by oxidation of the side chain of the molecule at C-12 and is catalyzed by the short-chain oxidoreductase prx1. The cytochrome P450 monooxygenase prx8 also plays a role in this step. The primary alcohol formed at C-12 is finally oxidized by the short-chain alcohol dehydrogenase prx4 that forms PR-toxin. This Penicillium rubens (strain ATCC 28089 / DSM 1075 / NRRL 1951 / Wisconsin 54-1255) (Penicillium chrysogenum) protein is Eremophilane O-acetyltransferase prx11.